The chain runs to 203 residues: Outer-membrane lipoprotein carrier protein (203 aa).

Residues 1-20 form the signal peptide; sequence MKKWLAISCLIAGMTSTAVY.

This sequence belongs to the LolA family. As to quaternary structure, monomer.

Its subcellular location is the periplasm. Its function is as follows. Participates in the translocation of lipoproteins from the inner membrane to the outer membrane. Only forms a complex with a lipoprotein if the residue after the N-terminal Cys is not an aspartate (The Asp acts as a targeting signal to indicate that the lipoprotein should stay in the inner membrane). The polypeptide is Outer-membrane lipoprotein carrier protein (Pectobacterium carotovorum subsp. carotovorum (strain PC1)).